We begin with the raw amino-acid sequence, 173 residues long: Flagellar assembly factor FliW (173 aa).

Residues 152–173 form a disordered region; that stretch reads STTVRRKASPPAAGEDKGDVQE.

Belongs to the FliW family. In terms of assembly, interacts with translational regulator CsrA and flagellin(s).

The protein localises to the cytoplasm. Functionally, acts as an anti-CsrA protein, binds CsrA and prevents it from repressing translation of its target genes, one of which is flagellin. Binds to flagellin and participates in the assembly of the flagellum. The chain is Flagellar assembly factor FliW from Nitratidesulfovibrio vulgaris (strain ATCC 29579 / DSM 644 / CCUG 34227 / NCIMB 8303 / VKM B-1760 / Hildenborough) (Desulfovibrio vulgaris).